The primary structure comprises 79 residues: Bacteriochlorophyll c-binding protein (79 aa).

An a bacteriochlorophyll c-binding site is contributed by histidine 25.

The protein belongs to the BChl C/E-binding protein family.

It is found in the chlorosome. It localises to the chlorosome envelope. Component of the photosynthetic apparatus. The light harvesting B740 complex binds bacteriochlorophyll c. The chain is Bacteriochlorophyll c-binding protein (csmA) from Chlorobaculum tepidum (strain ATCC 49652 / DSM 12025 / NBRC 103806 / TLS) (Chlorobium tepidum).